Reading from the N-terminus, the 491-residue chain is Aspartyl/glutamyl-tRNA(Asn/Gln) amidotransferase subunit B (491 aa).

Belongs to the GatB/GatE family. GatB subfamily. As to quaternary structure, heterotrimer of A, B and C subunits.

It carries out the reaction L-glutamyl-tRNA(Gln) + L-glutamine + ATP + H2O = L-glutaminyl-tRNA(Gln) + L-glutamate + ADP + phosphate + H(+). The enzyme catalyses L-aspartyl-tRNA(Asn) + L-glutamine + ATP + H2O = L-asparaginyl-tRNA(Asn) + L-glutamate + ADP + phosphate + 2 H(+). In terms of biological role, allows the formation of correctly charged Asn-tRNA(Asn) or Gln-tRNA(Gln) through the transamidation of misacylated Asp-tRNA(Asn) or Glu-tRNA(Gln) in organisms which lack either or both of asparaginyl-tRNA or glutaminyl-tRNA synthetases. The reaction takes place in the presence of glutamine and ATP through an activated phospho-Asp-tRNA(Asn) or phospho-Glu-tRNA(Gln). This chain is Aspartyl/glutamyl-tRNA(Asn/Gln) amidotransferase subunit B, found in Burkholderia cenocepacia (strain ATCC BAA-245 / DSM 16553 / LMG 16656 / NCTC 13227 / J2315 / CF5610) (Burkholderia cepacia (strain J2315)).